The chain runs to 133 residues: Large ribosomal subunit protein eL19 (133 aa).

The interval 55–83 is disordered; that stretch reads RGISGARKKPRRKGPGSRKGGKYSKLPRK. Residues 60 to 83 are compositionally biased toward basic residues; sequence ARKKPRRKGPGSRKGGKYSKLPRK.

Belongs to the eukaryotic ribosomal protein eL19 family. Part of the 50S ribosomal subunit.

Binds to the 23S rRNA. The chain is Large ribosomal subunit protein eL19 from Korarchaeum cryptofilum (strain OPF8).